A 225-amino-acid polypeptide reads, in one-letter code: Orotate phosphoribosyltransferase (225 aa).

Residues lysine 26, 73–74, arginine 100, lysine 101, lysine 104, histidine 106, and 127–135 contribute to the 5-phospho-alpha-D-ribose 1-diphosphate site; these read YK and EDVTTAGTS. 2 residues coordinate orotate: threonine 131 and arginine 160.

The protein belongs to the purine/pyrimidine phosphoribosyltransferase family. PyrE subfamily. In terms of assembly, homodimer. It depends on Mg(2+) as a cofactor.

The catalysed reaction is orotidine 5'-phosphate + diphosphate = orotate + 5-phospho-alpha-D-ribose 1-diphosphate. It functions in the pathway pyrimidine metabolism; UMP biosynthesis via de novo pathway; UMP from orotate: step 1/2. In terms of biological role, catalyzes the transfer of a ribosyl phosphate group from 5-phosphoribose 1-diphosphate to orotate, leading to the formation of orotidine monophosphate (OMP). The sequence is that of Orotate phosphoribosyltransferase from Lachnoclostridium phytofermentans (strain ATCC 700394 / DSM 18823 / ISDg) (Clostridium phytofermentans).